We begin with the raw amino-acid sequence, 766 residues long: Single-minded homolog 1 (766 aa).

Positions 1–53 (MKEKSKNAARTRREKENSEFYELAKLLPLPSAITSQLDKASIIRLTTSYLKMR) constitute a bHLH domain. PAS domains lie at 77–147 (GREL…QPYH) and 218–288 (PPSA…LVKG). The PAC domain maps to 292 to 335 (TKYYRFLAKHGGWVWVQSYATIVHNSRSSRPHCIVSVNYVLTDT). In terms of domain architecture, Single-minded C-terminal spans 336–766 (EYKGLQLSLD…GTSVIITNGS (431 aa)). The span at 353 to 365 (AFSYTSSSTPTMT) shows a compositional bias: polar residues. Disordered stretches follow at residues 353 to 431 (AFSY…SQHD) and 528 to 563 (WDED…EPSK). A Nuclear localization signal motif is present at residues 368-387 (RKGAKSRLSSSKSKSRTSPY). Residues 373 to 385 (SRLSSSKSKSRTS) show a composition bias toward low complexity. The span at 394-404 (HTERSESDHDS) shows a compositional bias: basic and acidic residues.

In terms of assembly, efficient DNA binding requires dimerization with another bHLH protein. Heterodimer; forms a heterodimer with ARNT, ARNT2.

The protein resides in the nucleus. Functionally, transcriptional factor that may have pleiotropic effects during embryogenesis and in the adult. This is Single-minded homolog 1 (SIM1) from Pan paniscus (Pygmy chimpanzee).